Reading from the N-terminus, the 118-residue chain is Large ribosomal subunit protein uL18 (118 aa).

Residues 1–25 (MISKPDKNKIRQKRHRRVRGKLSGT) form a disordered region. The span at 10–20 (IRQKRHRRVRG) shows a compositional bias: basic residues.

It belongs to the universal ribosomal protein uL18 family. In terms of assembly, part of the 50S ribosomal subunit; part of the 5S rRNA/L5/L18/L25 subcomplex. Contacts the 5S and 23S rRNAs.

Functionally, this is one of the proteins that bind and probably mediate the attachment of the 5S RNA into the large ribosomal subunit, where it forms part of the central protuberance. The sequence is that of Large ribosomal subunit protein uL18 from Streptococcus pyogenes serotype M5 (strain Manfredo).